Consider the following 338-residue polypeptide: Phenylalanine--tRNA ligase alpha subunit (338 aa).

Glu-252 contributes to the Mg(2+) binding site.

It belongs to the class-II aminoacyl-tRNA synthetase family. Phe-tRNA synthetase alpha subunit type 1 subfamily. Tetramer of two alpha and two beta subunits. It depends on Mg(2+) as a cofactor.

Its subcellular location is the cytoplasm. It catalyses the reaction tRNA(Phe) + L-phenylalanine + ATP = L-phenylalanyl-tRNA(Phe) + AMP + diphosphate + H(+). This Pseudomonas fluorescens (strain Pf0-1) protein is Phenylalanine--tRNA ligase alpha subunit.